A 392-amino-acid chain; its full sequence is Formate-dependent phosphoribosylglycinamide formyltransferase (392 aa).

Residues 22–23 (EL) and Glu-82 contribute to the N(1)-(5-phospho-beta-D-ribosyl)glycinamide site. ATP contacts are provided by residues Arg-114, Lys-155, 160–165 (SSGKGQ), 195–198 (EGVV), and Glu-203. Residues 119-308 (RLAAEELQLP…EFALHVRAFL (190 aa)) form the ATP-grasp domain. Residues Glu-267 and Glu-279 each contribute to the Mg(2+) site. N(1)-(5-phospho-beta-D-ribosyl)glycinamide contacts are provided by residues Asp-286, Lys-355, and 362-363 (RR).

It belongs to the PurK/PurT family. Homodimer.

The catalysed reaction is N(1)-(5-phospho-beta-D-ribosyl)glycinamide + formate + ATP = N(2)-formyl-N(1)-(5-phospho-beta-D-ribosyl)glycinamide + ADP + phosphate + H(+). Its pathway is purine metabolism; IMP biosynthesis via de novo pathway; N(2)-formyl-N(1)-(5-phospho-D-ribosyl)glycinamide from N(1)-(5-phospho-D-ribosyl)glycinamide (formate route): step 1/1. Functionally, involved in the de novo purine biosynthesis. Catalyzes the transfer of formate to 5-phospho-ribosyl-glycinamide (GAR), producing 5-phospho-ribosyl-N-formylglycinamide (FGAR). Formate is provided by PurU via hydrolysis of 10-formyl-tetrahydrofolate. This is Formate-dependent phosphoribosylglycinamide formyltransferase from Shigella flexneri.